Consider the following 91-residue polypeptide: Acyl-CoA-binding domain-containing protein 1 (91 aa).

The ACB domain maps to 3–88 (LQEDFEQYAE…VKQLLEEAAA (86 aa)). An acyl-CoA is bound by residues Lys15, 30-34 (YGLYK), Lys56, and Tyr75.

This sequence belongs to the ACBP family. As to expression, highly expressed in leaves. Expressed at low levels in roots and seeds.

It localises to the cytoplasm. The protein localises to the cytosol. In terms of biological role, binds medium- and long-chain acyl-CoA esters with high affinity. Can interact in vitro with palmitoyl-CoA, oleoyl-CoA, linoleoyl-CoA and linolenoyl-CoA. Binds phosphatidic acid (PA) and phosphatidylcholine (PC) in vitro. May play a role in the biosynthesis of phospholipids. The chain is Acyl-CoA-binding domain-containing protein 1 from Oryza sativa subsp. japonica (Rice).